The following is a 325-amino-acid chain: Outer spore wall protein LDS1 (325 aa).

The Cytoplasmic segment spans residues 1–91 (MSFTGSLALA…NTNKSSYSTT (91 aa)). Residues 92 to 112 (MLGILSSYLIMFALVSFVYWA) traverse the membrane as a helical segment. Topologically, residues 113-118 (TITPMY) are extracellular. A helical transmembrane segment spans residues 119–139 (TAFLIVLGPIGLFIAIFHSFL). The Cytoplasmic portion of the chain corresponds to 140–208 (QANVFTLLFM…VKYMLGLSVL (69 aa)). Residues 209-229 (FVLLVISFFPLIGPILFHILI) form a helical membrane-spanning segment. At 230–263 (SPFITQIYFTKVLRLQNFDNIQRRENIYLHAGQY) the chain is on the extracellular side. A helical transmembrane segment spans residues 264 to 284 (ASFGFLAGLIESVPILAGFAI). The Cytoplasmic segment spans residues 285–325 (STNTIGSVLFNLDHPMVPENLVETQAEIEAAPQDINQQPNQ).

This sequence belongs to the LDS family.

It is found in the prospore membrane. Its subcellular location is the lipid droplet. It localises to the spore wall. In terms of biological role, involved in spore wall assembly. The protein is Outer spore wall protein LDS1 of Saccharomyces cerevisiae (strain ATCC 204508 / S288c) (Baker's yeast).